The primary structure comprises 398 residues: Argininosuccinate synthase (398 aa).

Residue 9-17 participates in ATP binding; sequence AYSGGLDTS. Tyrosine 85 is an L-citrulline binding site. Glycine 115 lines the ATP pocket. Threonine 117, asparagine 121, and aspartate 122 together coordinate L-aspartate. Asparagine 121 is a binding site for L-citrulline. Residues arginine 125, serine 173, glutamate 258, and tyrosine 270 each contribute to the L-citrulline site.

It belongs to the argininosuccinate synthase family. Type 1 subfamily. In terms of assembly, homotetramer.

It localises to the cytoplasm. It carries out the reaction L-citrulline + L-aspartate + ATP = 2-(N(omega)-L-arginino)succinate + AMP + diphosphate + H(+). It participates in amino-acid biosynthesis; L-arginine biosynthesis; L-arginine from L-ornithine and carbamoyl phosphate: step 2/3. The sequence is that of Argininosuccinate synthase from Streptococcus pneumoniae (strain Hungary19A-6).